The primary structure comprises 275 residues: Large ribosomal subunit protein uL2 (275 aa).

Disordered stretches follow at residues 28–49 and 224–246; these read APHA…HGRI and AMNP…NPHP.

It belongs to the universal ribosomal protein uL2 family. In terms of assembly, part of the 50S ribosomal subunit. Forms a bridge to the 30S subunit in the 70S ribosome.

In terms of biological role, one of the primary rRNA binding proteins. Required for association of the 30S and 50S subunits to form the 70S ribosome, for tRNA binding and peptide bond formation. It has been suggested to have peptidyltransferase activity; this is somewhat controversial. Makes several contacts with the 16S rRNA in the 70S ribosome. This chain is Large ribosomal subunit protein uL2, found in Stenotrophomonas maltophilia (strain R551-3).